A 963-amino-acid polypeptide reads, in one-letter code: Ubiquitin carboxyl-terminal hydrolase 4 (963 aa).

One can recognise a DUSP domain in the interval proline 11 to valine 122. The necessary for interaction with SART3 stretch occupies residues threonine 27–glutamate 216. Positions valine 133–lysine 141 match the Nuclear export signal motif. The region spanning leucine 142–arginine 226 is the Ubiquitin-like 1 domain. The segment at asparagine 219–serine 277 is disordered. Residues proline 225–threonine 243 show a composition bias toward polar residues. The required for USP4 activation by providing conformational flexibility between the DUSP and catalytic domains stretch occupies residues glutamine 229–threonine 295. Residues serine 244 to alanine 261 are compositionally biased toward low complexity. One can recognise a USP domain in the interval cysteine 302 to arginine 923. The active-site Nucleophile is cysteine 311. The segment at proline 384–phenylalanine 386 is regulates ubiquitin dissociation. The interval leucine 405 to glutamate 407 is necessary for interaction with RBL2. At serine 445 the chain carries Phosphoserine. Residues leucine 459–glutamate 463 form a necessary for interaction with RB1 and RBL2 region. Zn(2+) contacts are provided by cysteine 461 and cysteine 464. The Ubiquitin-like 2 domain maps to leucine 483 to serine 571. An interacts with DUSP and ubiquitin-like 1 domains and is required for USP4 activation region spans residues lysine 485–alanine 775. The segment at proline 634–proline 701 is disordered. 2 positions are modified to phosphoserine: serine 675 and serine 680. The short motif at glutamine 767 to lysine 772 is the Nuclear localization signal element. Zn(2+) contacts are provided by cysteine 799 and cysteine 802. Residue histidine 881 is the Proton acceptor of the active site. Residues threonine 930 to asparagine 963 are disordered. Residues glycine 953–asparagine 963 show a composition bias toward acidic residues.

The protein belongs to the peptidase C19 family. USP4 subfamily. Interacts with RB1 (both dephosphorylated and hypophosphorylated forms). Interacts with RBL1 and RBL2. Interacts with ADORA2A (via cytoplasmic C-terminus); the interaction is direct. Interacts with SART3; recruits USP4 to its substrate PRPF3. Phosphorylated at Ser-445 by PKB/AKT1 in response to EGF stimulus, promoting its ability deubiquitinate RHEB. Post-translationally, monoubiquitinated by TRIM21. Ubiquitination does not lead to its proteasomal degradation. Autodeubiquitinated.

The protein resides in the cytoplasm. It is found in the nucleus. It carries out the reaction Thiol-dependent hydrolysis of ester, thioester, amide, peptide and isopeptide bonds formed by the C-terminal Gly of ubiquitin (a 76-residue protein attached to proteins as an intracellular targeting signal).. The completion of the deubiquitinase reaction is mediated by the DUSP and ubiquitin-like 1 domains which promotes the release of ubiquitin from the catalytic site enabling subsequent reactions to occur. In terms of biological role, deubiquitinating enzyme that removes conjugated ubiquitin from target proteins. Deubiquitinates PDPK1. Deubiquitinates TRIM21. Deubiquitinates receptor ADORA2A which increases the amount of functional receptor at the cell surface. Deubiquitinates HAS2. Deubiquitinates RHEB in response to EGF signaling, promoting mTORC1 signaling. May regulate mRNA splicing through deubiquitination of the U4 spliceosomal protein PRPF3. This may prevent its recognition by the U5 component PRPF8 thereby destabilizing interactions within the U4/U6.U5 snRNP. May also play a role in the regulation of quality control in the ER. The chain is Ubiquitin carboxyl-terminal hydrolase 4 (USP4) from Bos taurus (Bovine).